The chain runs to 564 residues: Proline--tRNA ligase (564 aa).

Belongs to the class-II aminoacyl-tRNA synthetase family. ProS type 1 subfamily. As to quaternary structure, homodimer.

It is found in the cytoplasm. The enzyme catalyses tRNA(Pro) + L-proline + ATP = L-prolyl-tRNA(Pro) + AMP + diphosphate. Functionally, catalyzes the attachment of proline to tRNA(Pro) in a two-step reaction: proline is first activated by ATP to form Pro-AMP and then transferred to the acceptor end of tRNA(Pro). As ProRS can inadvertently accommodate and process non-cognate amino acids such as alanine and cysteine, to avoid such errors it has two additional distinct editing activities against alanine. One activity is designated as 'pretransfer' editing and involves the tRNA(Pro)-independent hydrolysis of activated Ala-AMP. The other activity is designated 'posttransfer' editing and involves deacylation of mischarged Ala-tRNA(Pro). The misacylated Cys-tRNA(Pro) is not edited by ProRS. The polypeptide is Proline--tRNA ligase (Coxiella burnetii (strain RSA 331 / Henzerling II)).